A 304-amino-acid polypeptide reads, in one-letter code: uncharacterized protein (304 aa).

Belongs to the mimivirus L137 family.

This is an uncharacterized protein from Acanthamoeba polyphaga mimivirus (APMV).